The following is a 94-amino-acid chain: ESAT-6-like protein EsxO (94 aa).

The protein belongs to the WXG100 family. ESAT-6 subfamily. As to quaternary structure, forms a complex with EsxP.

Its subcellular location is the secreted. This is ESAT-6-like protein EsxO from Mycobacterium tuberculosis (strain CDC 1551 / Oshkosh).